The sequence spans 363 residues: Spermidine/putrescine import ATP-binding protein PotA (363 aa).

Residues 4 to 234 enclose the ABC transporter domain; it reads LELRNVIRRF…PANRFIADFI (231 aa). 36–43 is a binding site for ATP; it reads GPSGCGKT.

This sequence belongs to the ABC transporter superfamily. Spermidine/putrescine importer (TC 3.A.1.11.1) family. In terms of assembly, the complex is composed of two ATP-binding proteins (PotA), two transmembrane proteins (PotB and PotC) and a solute-binding protein (PotD).

It is found in the cell inner membrane. The enzyme catalyses ATP + H2O + polyamine-[polyamine-binding protein]Side 1 = ADP + phosphate + polyamineSide 2 + [polyamine-binding protein]Side 1.. In terms of biological role, part of the ABC transporter complex PotABCD involved in spermidine/putrescine import. Responsible for energy coupling to the transport system. The protein is Spermidine/putrescine import ATP-binding protein PotA of Nitrosomonas eutropha (strain DSM 101675 / C91 / Nm57).